Here is a 178-residue protein sequence, read N- to C-terminus: Imidazoleglycerol-phosphate dehydratase (178 aa).

The protein belongs to the imidazoleglycerol-phosphate dehydratase family.

The protein resides in the cytoplasm. It catalyses the reaction D-erythro-1-(imidazol-4-yl)glycerol 3-phosphate = 3-(imidazol-4-yl)-2-oxopropyl phosphate + H2O. Its pathway is amino-acid biosynthesis; L-histidine biosynthesis; L-histidine from 5-phospho-alpha-D-ribose 1-diphosphate: step 6/9. The polypeptide is Imidazoleglycerol-phosphate dehydratase (Archaeoglobus fulgidus (strain ATCC 49558 / DSM 4304 / JCM 9628 / NBRC 100126 / VC-16)).